A 144-amino-acid chain; its full sequence is Small ribosomal subunit protein bS6 (144 aa).

The interval 97-144 (DTEQSLIMKSKDEKGDKPERSERRRRDDEEVDAAPAATDTDGDNAEAA) is disordered. The span at 105–124 (KSKDEKGDKPERSERRRRDD) shows a compositional bias: basic and acidic residues.

The protein belongs to the bacterial ribosomal protein bS6 family.

Its function is as follows. Binds together with bS18 to 16S ribosomal RNA. The protein is Small ribosomal subunit protein bS6 of Xanthomonas campestris pv. campestris (strain B100).